A 468-amino-acid polypeptide reads, in one-letter code: 3-isopropylmalate dehydratase large subunit (468 aa).

3 residues coordinate [4Fe-4S] cluster: Cys349, Cys409, and Cys412.

It belongs to the aconitase/IPM isomerase family. LeuC type 1 subfamily. As to quaternary structure, heterodimer of LeuC and LeuD. The cofactor is [4Fe-4S] cluster.

It catalyses the reaction (2R,3S)-3-isopropylmalate = (2S)-2-isopropylmalate. The protein operates within amino-acid biosynthesis; L-leucine biosynthesis; L-leucine from 3-methyl-2-oxobutanoate: step 2/4. Catalyzes the isomerization between 2-isopropylmalate and 3-isopropylmalate, via the formation of 2-isopropylmaleate. The chain is 3-isopropylmalate dehydratase large subunit from Roseobacter denitrificans (strain ATCC 33942 / OCh 114) (Erythrobacter sp. (strain OCh 114)).